We begin with the raw amino-acid sequence, 64 residues long: Large ribosomal subunit protein uL30 (64 aa).

This sequence belongs to the universal ribosomal protein uL30 family. In terms of assembly, part of the 50S ribosomal subunit.

The chain is Large ribosomal subunit protein uL30 from Bdellovibrio bacteriovorus (strain ATCC 15356 / DSM 50701 / NCIMB 9529 / HD100).